The chain runs to 325 residues: CRISPR-associated endonuclease Cas1 3 (325 aa).

The Mn(2+) site is built by glutamate 152, histidine 217, and glutamate 232.

It belongs to the CRISPR-associated endonuclease Cas1 family. As to quaternary structure, homodimer, forms a heterotetramer with a Cas2 homodimer. The cofactor is Mg(2+). It depends on Mn(2+) as a cofactor.

Functionally, CRISPR (clustered regularly interspaced short palindromic repeat), is an adaptive immune system that provides protection against mobile genetic elements (viruses, transposable elements and conjugative plasmids). CRISPR clusters contain spacers, sequences complementary to antecedent mobile elements, and target invading nucleic acids. CRISPR clusters are transcribed and processed into CRISPR RNA (crRNA). Acts as a dsDNA endonuclease. Involved in the integration of spacer DNA into the CRISPR cassette. The chain is CRISPR-associated endonuclease Cas1 3 from Thermodesulfovibrio yellowstonii (strain ATCC 51303 / DSM 11347 / YP87).